A 592-amino-acid chain; its full sequence is Threonine--tRNA ligase (592 aa).

Residues 193-488 (DHRKLGPALG…LIEHYGGAFP (296 aa)) are catalytic. Cys284, His335, and His465 together coordinate Zn(2+).

The protein belongs to the class-II aminoacyl-tRNA synthetase family. As to quaternary structure, homodimer. Zn(2+) is required as a cofactor.

The protein resides in the cytoplasm. It carries out the reaction tRNA(Thr) + L-threonine + ATP = L-threonyl-tRNA(Thr) + AMP + diphosphate + H(+). Functionally, catalyzes the attachment of threonine to tRNA(Thr) in a two-step reaction: L-threonine is first activated by ATP to form Thr-AMP and then transferred to the acceptor end of tRNA(Thr). Also edits incorrectly charged L-seryl-tRNA(Thr). The chain is Threonine--tRNA ligase from Treponema pallidum (strain Nichols).